We begin with the raw amino-acid sequence, 453 residues long: MKFSTVILAAGKGTRMHSNMPKVLHTLAGKPMVKHVIDTCNNLGAQNIHLVYGHGGDQMQQALVNESVNWVLQAQQLGTGHAVDQASPHFQDDEKILVLYGDVPLISEDTIESLLEAQPTDGIALLTVVLEDPTGYGRIVRKRGPVVAIVEQKDASEEQKLIKEVNTGVLVATGRDLKRWLAGLNNNNAQGEYYLTDVIAAAHDEGRAVEAVHPSHSIEVEGVNDRIQLARLERAFQARQAKKLLEQGVMLRDPARFDLRGTLQCGSDVEIDVNVIIEGNVSIGNNVVIGAGSILKDCEIDDNTVIRPYSVIEGATVGENCTVGPFTRLRPGAELRDDAHVGNFVEMKNARLGEGSKANHLTYLGDAEIGKGVNVGAGVITCNYDGANKHKTVIGDDVFVGSDCQLVAPVTIGNGATIGAGTTLTKNVAEGELVITRAPERKIAGWQRPAKKK.

The segment at M1 to R226 is pyrophosphorylase. UDP-N-acetyl-alpha-D-glucosamine is bound by residues L8 to G11, K22, Q73, G78 to T79, Y100 to D102, G137, E151, N166, and N224. D102 is a binding site for Mg(2+). N224 serves as a coordination point for Mg(2+). A linker region spans residues I227 to Q247. The tract at residues G248 to K453 is N-acetyltransferase. The UDP-N-acetyl-alpha-D-glucosamine site is built by R330 and K348. The Proton acceptor role is filled by H360. UDP-N-acetyl-alpha-D-glucosamine contacts are provided by Y363 and N374. Residues A377, N383–Y384, S402, A420, and R437 each bind acetyl-CoA.

This sequence in the N-terminal section; belongs to the N-acetylglucosamine-1-phosphate uridyltransferase family. The protein in the C-terminal section; belongs to the transferase hexapeptide repeat family. Homotrimer. Mg(2+) is required as a cofactor.

It localises to the cytoplasm. The catalysed reaction is alpha-D-glucosamine 1-phosphate + acetyl-CoA = N-acetyl-alpha-D-glucosamine 1-phosphate + CoA + H(+). It carries out the reaction N-acetyl-alpha-D-glucosamine 1-phosphate + UTP + H(+) = UDP-N-acetyl-alpha-D-glucosamine + diphosphate. It functions in the pathway nucleotide-sugar biosynthesis; UDP-N-acetyl-alpha-D-glucosamine biosynthesis; N-acetyl-alpha-D-glucosamine 1-phosphate from alpha-D-glucosamine 6-phosphate (route II): step 2/2. Its pathway is nucleotide-sugar biosynthesis; UDP-N-acetyl-alpha-D-glucosamine biosynthesis; UDP-N-acetyl-alpha-D-glucosamine from N-acetyl-alpha-D-glucosamine 1-phosphate: step 1/1. It participates in bacterial outer membrane biogenesis; LPS lipid A biosynthesis. Its function is as follows. Catalyzes the last two sequential reactions in the de novo biosynthetic pathway for UDP-N-acetylglucosamine (UDP-GlcNAc). The C-terminal domain catalyzes the transfer of acetyl group from acetyl coenzyme A to glucosamine-1-phosphate (GlcN-1-P) to produce N-acetylglucosamine-1-phosphate (GlcNAc-1-P), which is converted into UDP-GlcNAc by the transfer of uridine 5-monophosphate (from uridine 5-triphosphate), a reaction catalyzed by the N-terminal domain. In Vibrio cholerae serotype O1 (strain ATCC 39541 / Classical Ogawa 395 / O395), this protein is Bifunctional protein GlmU.